The chain runs to 326 residues: N-acetyl-gamma-glutamyl-phosphate reductase (326 aa).

The active site involves C155.

It belongs to the NAGSA dehydrogenase family. Type 1 subfamily.

The protein localises to the cytoplasm. The catalysed reaction is N-acetyl-L-glutamate 5-semialdehyde + phosphate + NADP(+) = N-acetyl-L-glutamyl 5-phosphate + NADPH + H(+). The protein operates within amino-acid biosynthesis; L-arginine biosynthesis; N(2)-acetyl-L-ornithine from L-glutamate: step 3/4. Functionally, catalyzes the NADPH-dependent reduction of N-acetyl-5-glutamyl phosphate to yield N-acetyl-L-glutamate 5-semialdehyde. The chain is N-acetyl-gamma-glutamyl-phosphate reductase from Shewanella woodyi (strain ATCC 51908 / MS32).